The following is a 56-amino-acid chain: MAVPKKKKSKSKRNHRHAVWKGKAAIAAQKAISLGKSVLTGKAQGFVYPIEEEEEE.

The span at 1 to 20 (MAVPKKKKSKSKRNHRHAVW) shows a compositional bias: basic residues. Positions 1 to 21 (MAVPKKKKSKSKRNHRHAVWK) are disordered.

The protein belongs to the bacterial ribosomal protein bL32 family.

The sequence is that of Large ribosomal subunit protein bL32 from Prochlorococcus marinus (strain MIT 9312).